The primary structure comprises 434 residues: 3-phosphoshikimate 1-carboxyvinyltransferase (434 aa).

3-phosphoshikimate contacts are provided by lysine 15, serine 16, and arginine 20. Residue lysine 15 participates in phosphoenolpyruvate binding. The phosphoenolpyruvate site is built by glycine 96 and arginine 124. Serine 169, glutamine 171, serine 195, aspartate 319, and lysine 346 together coordinate 3-phosphoshikimate. Residue glutamine 171 participates in phosphoenolpyruvate binding. The active-site Proton acceptor is the aspartate 319. Arginine 350 and arginine 394 together coordinate phosphoenolpyruvate.

The protein belongs to the EPSP synthase family. Monomer.

Its subcellular location is the cytoplasm. The enzyme catalyses 3-phosphoshikimate + phosphoenolpyruvate = 5-O-(1-carboxyvinyl)-3-phosphoshikimate + phosphate. Its pathway is metabolic intermediate biosynthesis; chorismate biosynthesis; chorismate from D-erythrose 4-phosphate and phosphoenolpyruvate: step 6/7. Functionally, catalyzes the transfer of the enolpyruvyl moiety of phosphoenolpyruvate (PEP) to the 5-hydroxyl of shikimate-3-phosphate (S3P) to produce enolpyruvyl shikimate-3-phosphate and inorganic phosphate. This Prosthecochloris aestuarii (strain DSM 271 / SK 413) protein is 3-phosphoshikimate 1-carboxyvinyltransferase.